The sequence spans 422 residues: Protein FAM53B (422 aa).

A phosphoserine mark is found at Ser-118, Ser-167, Ser-169, Ser-179, Ser-212, and Ser-268. The span at 245 to 268 (SANSTPASTPELARRSSGLSRSRS) shows a compositional bias: low complexity. Positions 245–269 (SANSTPASTPELARRSSGLSRSRSQ) are disordered. Positions 281–284 (KRRR) match the Nuclear localization signal motif.

It belongs to the FAM53 family. In terms of assembly, interacts with CTNNB1. Detected in skeletal muscle, kidney, spleen, thyroid, testis, ovary, small intestine, colon and peripheral blood.

It localises to the nucleus. In terms of biological role, acts as a regulator of Wnt signaling pathway by regulating beta-catenin (CTNNB1) nuclear localization. The protein is Protein FAM53B of Homo sapiens (Human).